The following is a 1488-amino-acid chain: Neuropathy target esterase sws (1488 aa).

At 1–34 (MDVLELLRASVNGCYNTLFSDAWSQYVSKQIATT) the chain is on the lumenal side. The chain crosses the membrane as a helical span at residues 35–55 (TYWYGALLAIGALFIAWFLYF). Topologically, residues 56-1488 (KRLASLRLRD…ENVTEADTKN (1433 aa)) are cytoplasmic. Residue 175 to 302 (IFGHFEKPIF…IRVIQVIMIR (128 aa)) coordinates a nucleoside 3',5'-cyclic phosphate. Disordered regions lie at residues 339 to 379 (PGPV…DPNP) and 402 to 440 (QQQQSSGVSVGGTHRSSGACTPTGSGGESPDGTGNATIT). 2 stretches are compositionally biased toward low complexity: residues 344–356 (SQASQASRAMASR) and 402–413 (QQQQSSGVSVGG). Polar residues predominate over residues 415 to 424 (HRSSGACTPT). A nucleoside 3',5'-cyclic phosphate is bound by residues 458–587 (ELGL…VVRR) and 576–703 (IVLD…LSHR). In terms of domain architecture, PNPLA spans 929 to 1095 (LVLGGGGARG…VNNLPGHLWR (167 aa)). The GXGXXG motif lies at 933–938 (GGGARG). Positions 960-964 (GVSIG) match the GXSXG motif. The active-site Nucleophile is serine 962. Residue aspartate 1082 is the Proton acceptor of the active site. The DGA/G motif lies at 1082 to 1084 (DGG). A Phosphoserine modification is found at serine 1176. Disordered stretches follow at residues 1348–1376 (RKVDKSTQSTPPTPNKKHPSTPTSSQGNL) and 1398–1488 (EHKR…DTKN). Residues 1399 to 1410 (HKRRQKSKHKRD) are compositionally biased toward basic residues. Over residues 1440 to 1452 (IDAKLDQLRKLQQ) the composition is skewed to basic and acidic residues. Acidic residues predominate over residues 1456 to 1470 (QGNESEQEQEQEQEQ).

It belongs to the NTE family. Interacts with Pka-C3; interaction inhibits the catalytic function of Pka-C3 and the esterase activity of sws.

It is found in the endoplasmic reticulum membrane. It carries out the reaction a 1-acyl-sn-glycero-3-phosphocholine + H2O = sn-glycerol 3-phosphocholine + a fatty acid + H(+). Functionally, phospholipase B that deacylates intracellular phosphatidylcholine (PtdCho), generating glycerophosphocholine (GroPtdCho). This deacylation occurs at both sn-2 and sn-1 positions of PtdCho. Its specific chemical modification by certain organophosphorus (OP) compounds leads to distal axonopathy. Plays a role in the signaling mechanism between neurons and glia that regulates glia wrapping during development of the adult brain. Essential for membrane lipid homeostasis and cell survival in both neurons and glia of the adult brain. The chain is Neuropathy target esterase sws from Drosophila mojavensis (Fruit fly).